Reading from the N-terminus, the 331-residue chain is Cathepsin S (331 aa).

A signal peptide spans 1–16 (MNWLVWALLLCSSAMA). The propeptide at 17 to 114 (HVHRDPTLDH…VTYKSDPNQK (98 aa)) is activation peptide. The N-linked (GlcNAc...) asparagine glycan is linked to N104. 4 cysteine pairs are disulfide-bonded: C126-C224, C136-C180, C170-C213, and C272-C320. The active site involves C139. Catalysis depends on residues H278 and N298.

The protein belongs to the peptidase C1 family. Monomer.

Its subcellular location is the lysosome. The protein resides in the secreted. It localises to the cytoplasmic vesicle. The protein localises to the phagosome. It catalyses the reaction Similar to cathepsin L, but with much less activity on Z-Phe-Arg-|-NHMec, and more activity on the Z-Val-Val-Arg-|-Xaa compound.. Functionally, thiol protease. Key protease responsible for the removal of the invariant chain from MHC class II molecules and MHC class II antigen presentation. The bond-specificity of this proteinase is in part similar to the specificities of cathepsin L. The sequence is that of Cathepsin S (CTSS) from Bos taurus (Bovine).